The chain runs to 150 residues: Ribonuclease K6 (150 aa).

The first 23 residues, 1–23 (MVLCFPLLLLLLVLWGPVCPLHA), serve as a signal peptide directing secretion. His-38 serves as the catalytic Proton acceptor. Disulfide bonds link Cys-46/Cys-104, Cys-60/Cys-114, Cys-78/Cys-129, and Cys-85/Cys-92. N-linked (GlcNAc...) asparagine glycosylation is present at Asn-55. Substrate is bound by residues 61–65 (KHQNT) and Lys-86. An N-linked (GlcNAc...) asparagine glycan is attached at Asn-100. Arg-105 lines the substrate pocket. Catalysis depends on His-145, which acts as the Proton donor.

Belongs to the pancreatic ribonuclease family. In terms of assembly, interacts (via N-terminus) with bacterial lipopolysaccharide (LPS).

It is found in the secreted. Its subcellular location is the lysosome. The protein localises to the cytoplasmic granule. Ribonuclease which shows a preference for the pyrimidines uridine and cytosine. Has potent antibacterial activity against a range of Gram-positive and Gram-negative bacteria, including P.aeruginosa, A.baumanii, M.luteus, S.aureus, E.faecalis, E.faecium, S.saprophyticus and E.coli. Causes loss of bacterial membrane integrity, and also promotes agglutination of Gram-negative bacteria. Probably contributes to urinary tract sterility. Bactericidal activity is independent of RNase activity. The protein is Ribonuclease K6 (RNASE6) of Pongo pygmaeus (Bornean orangutan).